The chain runs to 785 residues: Adhesion G-protein coupled receptor G7 (785 aa).

An N-terminal signal peptide occupies residues Met1–Gly26. Residues Leu27–Ser435 are Extracellular-facing. 12 N-linked (GlcNAc...) asparagine glycosylation sites follow: Asn82, Asn122, Asn133, Asn152, Asn159, Asn178, Asn195, Asn239, Asn289, Asn348, Asn400, and Asn408. The GAIN-B domain maps to Phe271 to Tyr425. 2 cysteine pairs are disulfide-bonded: Cys380–Cys407 and Cys395–Cys409. The interval Cys380–Tyr425 is GPS. A helical membrane pass occupies residues Asn436–Thr456. Topologically, residues Arg457–Thr465 are cytoplasmic. The helical transmembrane segment at Trp466 to Ile486 threads the bilayer. The Extracellular portion of the chain corresponds to Glu487 to Thr523. The helical transmembrane segment at Ala524 to Ala544 threads the bilayer. Over Thr545–His561 the chain is Cytoplasmic. The helical transmembrane segment at Phe562–Ile582 threads the bilayer. Residues Gly583–Ser623 are Extracellular-facing. The helical transmembrane segment at Phe624–Val644 threads the bilayer. Residues Lys645–Ser668 are Cytoplasmic-facing. The helical transmembrane segment at Thr669 to Ser689 threads the bilayer. Residues Asn690–Arg694 lie on the Extracellular side of the membrane. The helical transmembrane segment at Ile695–Leu715 threads the bilayer. Over Tyr716 to Ser785 the chain is Cytoplasmic.

This sequence belongs to the G-protein coupled receptor 2 family. Adhesion G-protein coupled receptor (ADGR) subfamily. Selectively expressed in the intestinal tissues.

The protein localises to the membrane. Its function is as follows. Orphan receptor. The polypeptide is Adhesion G-protein coupled receptor G7 (Adgrg7) (Mus musculus (Mouse)).